A 642-amino-acid polypeptide reads, in one-letter code: MPIITLPDGSKREFANPVSTLDVALDIGPGLAKACIAGRVNGELKDATDLITADSELAIITAKDEEGVEILRHSCAHLLGHAIKQMWPETKMAIGPVIDNGFYYDIDLDHKLTHEDIEALEKRMLALAKTNYDVVKKVVSWQEARDAFDGRGEEYKIAILDENISKDATPALYHHEEYIDMCRGPHVPNMRFCQNFKLMSVAGAYWRGNSDNKMLQRVYGTAWADKKALKTHLVRLEEAAKRDHRKIGKQLDLYHMQEEAPGMVFWHNDGWSIFLELEKFIRQKLGQYTYQEVKGPLMMDRVLWERSGHWDKYAEAMFTTNSENREYAIKPMNCPGHVQIFNQGLKSYRDLPLRMAEFGCCHRNEPSGSLHGLMRVRGFTQDDAHVFCTDDQVQEEVSACIQMVYDTYATFGFDNIVVKLSTRPEKRIGDDDMWDRAEDALKQALANNNIKYEILPGEGAFYGPKIEFTLHDCLDRAWQCGTVQLDYALPTRLGATYVAEDNSRQTPVMIHRAILGSLERFIGILIEEYAGKFPTWLAPMQVVVMNITDKQADYVEEIVKFFKEQGIRASFDLRNEKIGFKIREHTLRRVPYLLVVGDQEMENKEVAVRTRDGIDLGKLKLEDFAAMIRQQISLRSLKLLEE.

Positions 1–61 (MPIITLPDGS…TADSELAIIT (61 aa)) constitute a TGS domain. Positions 243–534 (DHRKIGKQLD…LIEEYAGKFP (292 aa)) are catalytic. The Zn(2+) site is built by cysteine 334, histidine 385, and histidine 511.

It belongs to the class-II aminoacyl-tRNA synthetase family. As to quaternary structure, homodimer. Requires Zn(2+) as cofactor.

Its subcellular location is the cytoplasm. The catalysed reaction is tRNA(Thr) + L-threonine + ATP = L-threonyl-tRNA(Thr) + AMP + diphosphate + H(+). Its function is as follows. Catalyzes the attachment of threonine to tRNA(Thr) in a two-step reaction: L-threonine is first activated by ATP to form Thr-AMP and then transferred to the acceptor end of tRNA(Thr). Also edits incorrectly charged L-seryl-tRNA(Thr). The polypeptide is Threonine--tRNA ligase (Shewanella frigidimarina (strain NCIMB 400)).